Here is a 490-residue protein sequence, read N- to C-terminus: Protein twist (490 aa).

Disordered regions lie at residues 48–72 (QLQH…QHAQ), 96–165 (PSNE…TGGS), and 244–264 (QQQQ…HAQM). Over residues 54–68 (QHLHSHQHHQQHHQQ) the composition is skewed to basic residues. Low complexity-rich tracts occupy residues 102-134 (STSS…NPSG) and 244-263 (QQQQ…SHAQ). Ser325 and Ser328 each carry phosphoserine. A disordered region spans residues 330–361 (LDGSDAGGKAFRKPRRRLKRKPSKTEETDEFS). The span at 339–351 (AFRKPRRRLKRKP) shows a compositional bias: basic residues. In terms of domain architecture, bHLH spans 362–413 (NQRVMANVRERQRTQSLNDAFKSLQQIIPTLPSDKLSKIQTLKLATRYIDFL).

As to quaternary structure, efficient DNA binding requires dimerization with another bHLH protein. Homodimer. Interacts with akirin. In terms of tissue distribution, expressed in embryonic abdomen; a single cell ventrally, pairs of cells laterally and three cells dorsally in each hemisegment. In the thorax, there are patches of cells associated with the imaginal disks. During larval development, cells proliferate and, in the abdomen, they form ventral, lateral and dorsal clusters, which are the precursors of the adult abdominal muscles. In the thorax, they form populations of cells in the imaginal disks that correspond to the adepithelial cells.

The protein resides in the nucleus. In terms of biological role, involved in the establishment and dorsoventral patterning of germ layers in the embryo. This is Protein twist (twi) from Drosophila melanogaster (Fruit fly).